A 205-amino-acid polypeptide reads, in one-letter code: Protein MIS12 homolog (205 aa).

A coiled-coil region spans residues 108 to 205 (PYSEEDFQHL…EKESKRLKIS (98 aa)).

The protein belongs to the mis12 family. Component of the MIS12 complex composed of MIS12, DSN1, NSL1 and PMF1. Also interacts with KNL1, CBX3, CBX5, NDC80 and ZWINT.

It localises to the chromosome. The protein localises to the centromere. Its subcellular location is the kinetochore. Part of the MIS12 complex which is required for normal chromosome alignment and segregation and for kinetochore formation during mitosis. Essential for proper kinetochore microtubule attachments. The chain is Protein MIS12 homolog from Homo sapiens (Human).